Reading from the N-terminus, the 400-residue chain is 3-phenylpropionate/cinnamic acid dioxygenase ferredoxin--NAD(+) reductase component (400 aa).

FAD is bound at residue threonine 5–aspartate 36. Serine 146–glutamate 174 provides a ligand contact to NAD(+).

The protein belongs to the bacterial ring-hydroxylating dioxygenase ferredoxin reductase family. This dioxygenase system consists of four proteins: the two subunits of the hydroxylase component (HcaE and HcaF), a ferredoxin (HcaC) and a ferredoxin reductase (HcaD). The cofactor is FAD.

The catalysed reaction is 2 reduced [2Fe-2S]-[ferredoxin] + NAD(+) + H(+) = 2 oxidized [2Fe-2S]-[ferredoxin] + NADH. Its pathway is aromatic compound metabolism; 3-phenylpropanoate degradation. Its function is as follows. Part of the multicomponent 3-phenylpropionate dioxygenase, that converts 3-phenylpropionic acid (PP) and cinnamic acid (CI) into 3-phenylpropionate-dihydrodiol (PP-dihydrodiol) and cinnamic acid-dihydrodiol (CI-dihydrodiol), respectively. The protein is 3-phenylpropionate/cinnamic acid dioxygenase ferredoxin--NAD(+) reductase component of Escherichia coli O17:K52:H18 (strain UMN026 / ExPEC).